Reading from the N-terminus, the 185-residue chain is Large ribosomal subunit protein uL5 (185 aa).

The protein belongs to the universal ribosomal protein uL5 family. Part of the 50S ribosomal subunit; part of the 5S rRNA/L5/L18/L25 subcomplex. Contacts the 5S rRNA and the P site tRNA. Forms a bridge to the 30S subunit in the 70S ribosome.

Its function is as follows. This is one of the proteins that bind and probably mediate the attachment of the 5S RNA into the large ribosomal subunit, where it forms part of the central protuberance. In the 70S ribosome it contacts protein S13 of the 30S subunit (bridge B1b), connecting the 2 subunits; this bridge is implicated in subunit movement. Contacts the P site tRNA; the 5S rRNA and some of its associated proteins might help stabilize positioning of ribosome-bound tRNAs. The protein is Large ribosomal subunit protein uL5 of Magnetococcus marinus (strain ATCC BAA-1437 / JCM 17883 / MC-1).